The following is a 136-amino-acid chain: Histone H3 (136 aa).

A disordered region spans residues 1 to 43 (MARTKQTARKNVGGKAPRKHIGQKSARKTASTTAGMKKPHRYR). Lys10 bears the N6-methylated lysine mark. N6-acetyllysine occurs at positions 15 and 24. The span at 16 to 27 (APRKHIGQKSAR) shows a compositional bias: basic residues. N6-methylated lysine is present on residues Lys28 and Lys37.

Belongs to the histone H3 family. In terms of assembly, the nucleosome is a histone octamer containing two molecules each of H2A, H2B, H3 and H4 assembled in one H3-H4 heterotetramer and two H2A-H2B heterodimers. The octamer wraps approximately 147 bp of DNA.

It is found in the nucleus. It localises to the chromosome. Core component of nucleosome. Nucleosomes wrap and compact DNA into chromatin, limiting DNA accessibility to the cellular machineries which require DNA as a template. Histones thereby play a central role in transcription regulation, DNA repair, DNA replication and chromosomal stability. DNA accessibility is regulated via a complex set of post-translational modifications of histones, also called histone code, and nucleosome remodeling. This is Histone H3 from Euplotes crassus.